Consider the following 380-residue polypeptide: Kappa-type opioid receptor (380 aa).

At 1 to 57 the chain is on the extracellular side; sequence MDSPIQIFRGEPGPTCAPSACLPPNSSAWFPGWAEPDSNGSAGSEDAQLEPAHISPA. 2 N-linked (GlcNAc...) asparagine glycosylation sites follow: N25 and N39. The helical transmembrane segment at 58 to 85 threads the bilayer; sequence IPVIITAVYSVVFVVGLVGNSLVMFVII. Residues 86 to 95 lie on the Cytoplasmic side of the membrane; that stretch reads RYTKMKTATN. A helical membrane pass occupies residues 96–119; it reads IYIFNLALADALVTTTMPFQSTVY. The Extracellular segment spans residues 120–132; the sequence is LMNSWPFGDVLCK. A disulfide bond links C131 and C210. The helical transmembrane segment at 133 to 154 threads the bilayer; sequence IVISIDYYNMFTSIFTLTMMSV. At 155–173 the chain is on the cytoplasmic side; sequence DRYIAVCHPVKALDFRTPL. The chain crosses the membrane as a helical span at residues 174–196; the sequence is KAKIINICIWLLSSSVGISAIVL. The Extracellular portion of the chain corresponds to 197–222; the sequence is GGTKVREDVDVIECSLQFPDDDYSWW. A helical transmembrane segment spans residues 223 to 247; it reads DLFMKICVFIFAFVIPVLIIIVCYT. At 248-274 the chain is on the cytoplasmic side; sequence LMILRLKSVRLLSGSREKDRNLRRITR. A helical membrane pass occupies residues 275–296; the sequence is LVLVVVAVFVVCWTPIHIFILV. Topologically, residues 297–311 are extracellular; the sequence is EALGSTSHSTAALSS. The helical transmembrane segment at 312–333 threads the bilayer; that stretch reads YYFCIALGYTNSSLNPILYAFL. The Cytoplasmic segment spans residues 334-380; that stretch reads DENFKRCFRDFCFPLKMRMERQSTSRVRNTVQDPAYLRDIDGMNKPV. C345 is lipidated: S-palmitoyl cysteine.

It belongs to the G-protein coupled receptor 1 family. Interacts with NHERF1. Interacts with GABARAPL1. In terms of tissue distribution, detected in brain and placenta.

Its subcellular location is the cell membrane. Its function is as follows. G-protein coupled opioid receptor that functions as a receptor for endogenous alpha-neoendorphins and dynorphins, but has low affinity for beta-endorphins. Also functions as a receptor for various synthetic opioids and for the psychoactive diterpene salvinorin A. Ligand binding causes a conformation change that triggers signaling via guanine nucleotide-binding proteins (G proteins) and modulates the activity of down-stream effectors, such as adenylate cyclase. Signaling leads to the inhibition of adenylate cyclase activity. Inhibits neurotransmitter release by reducing calcium ion currents and increasing potassium ion conductance. Plays a role in the perception of pain. Plays a role in mediating reduced physical activity upon treatment with synthetic opioids. Plays a role in the regulation of salivation in response to synthetic opioids. May play a role in arousal and regulation of autonomic and neuroendocrine functions. This is Kappa-type opioid receptor (OPRK1) from Homo sapiens (Human).